Reading from the N-terminus, the 495-residue chain is Protein YhjJ (495 aa).

The first 24 residues, 1–24 (MQGTKIRLLAGSLLMLASAGYVQA), serve as a signal peptide directing secretion.

It belongs to the peptidase M16 family.

It localises to the periplasm. In Salmonella typhi, this protein is Protein YhjJ (yhjJ).